The primary structure comprises 150 residues: Auxin-binding protein 5 (150 aa).

A signal peptide spans 1–41; sequence MVRRRPATGAAQRPQLAAVGRGLLLASVLAAAASSLPVAES. Histidine 98, histidine 100, and glutamate 104 together coordinate Zn(2+). A glycan (N-linked (GlcNAc...) asparagine) is linked at asparagine 136. Residue histidine 147 coordinates Zn(2+).

As to quaternary structure, homodimer.

It is found in the endoplasmic reticulum lumen. In terms of biological role, this is probably a receptor for the plant hormone auxin. The chain is Auxin-binding protein 5 (ABP5) from Zea mays (Maize).